A 234-amino-acid polypeptide reads, in one-letter code: Core atranone cluster (CAC) protein 1 (234 aa).

The protein operates within mycotoxin biosynthesis. Part of the core atranone cluster (CAC) which products are predicted to catalyze most or all steps of mycotoxin atranone synthesis, starting from geranylgeranyl pyrophosphate (GGPP). The initial cyclization of GGPP to dolabellane is probably performed by the terpene cyclase ATR13. The Baeyer-Villiger oxidation near the end of the atranone synthesis, which converts atranones D and E to atranones F and G is predicted to be catalyzed by the monooxygenase ATR8. Of the CAC's other predicted gene products, the reducing PKS ATR6 might synthesize a polyketide chain. This polyketide is probably transferred onto the atranone backbone by the polyketide transferase ATR5. Other predicted CAC products include 4 oxygenases (ATR2, ATR3, ATR4, and ATR14), 3 short-chain reductases (ATR7, ATR9, and ATR10), and a methyltransferase (ATR12). These may all be involved in the various steps of atranone biosynthesis, although their specific roles must await experimental determination. The protein is Core atranone cluster (CAC) protein 1 of Stachybotrys chlorohalonatus (strain IBT 40285).